A 168-amino-acid polypeptide reads, in one-letter code: Ecotin (168 aa).

An N-terminal signal peptide occupies residues Met1–Ala21. An intrachain disulfide couples Cys76 to Cys113.

The protein belongs to the protease inhibitor I11 (ecotin) family. In terms of assembly, homodimer.

The protein resides in the periplasm. Functionally, general inhibitor of pancreatic serine proteases: inhibits chymotrypsin, trypsin, elastases, factor X, kallikrein as well as a variety of other proteases. In Yersinia enterocolitica serotype O:8 / biotype 1B (strain NCTC 13174 / 8081), this protein is Ecotin.